A 578-amino-acid chain; its full sequence is Polymerase acidic protein (578 aa).

In terms of assembly, the RNA polymerase is composed of three subunits: PB1, PB2 and PA. Phosphorylated on serines and threonines by host kinases.

Functionally, implicated in endonuclease cleavage of capped RNA primers. Displays an elongation factor activity in viral RNA synthesis. Dispensable for viral transcription, but not replication. The protein is Polymerase acidic protein of Infectious salmon anemia virus (isolate Atlantic salmon/Norway/810/9/99) (ISAV).